Here is a 2395-residue protein sequence, read N- to C-terminus: Centrosomal protein of 295 kDa (2395 aa).

Positions 1-540 (MKRKVMNGKL…KQADHLEVRP (540 aa)) are necessary for centriole targeting and microtubule association. Ser13 carries the post-translational modification Phosphoserine. Coiled-coil stretches lie at residues 53-84 (QRRN…LEKL), 114-148 (AERK…HIKA), 209-277 (DAHL…KRQT), 488-538 (ARHK…HLEV), and 567-592 (QQNR…VLKE). Disordered regions lie at residues 602–643 (LIPD…PVQP), 660–681 (GHIP…SQER), and 735–764 (SDSQ…LMPE). A Phosphoserine modification is found at Ser634. Over residues 735–750 (SDSQQISSEDSENISS) the composition is skewed to low complexity. Positions 817–848 (GQLELQKKVLQERQEAQEKLLSCTQKELEEQT) form a coiled coil. 3 disordered regions span residues 864–893 (SLPS…SMDN), 966–986 (ADTQ…KGLL), and 1212–1272 (VDPE…SKVT). The span at 1219–1250 (FQFSPQTQENRSSQQTGFSSFTPSLRQPSCVS) shows a compositional bias: polar residues. A coiled-coil region spans residues 1444–1488 (HDDLQALQQQLDVHREAIRSCQDIQEELLLQRLNKLEQRVSSKQI). The residue at position 1565 (Ser1565) is a Phosphoserine. Residues 1677–1692 (PWGDSSQGSSSGDQPG) are compositionally biased toward low complexity. 5 disordered regions span residues 1677–1715 (PWGD…RASK), 1819–1845 (SEEE…ETQE), 1875–1899 (ESFS…GSLS), 1989–2013 (DLSS…SSEK), and 2354–2395 (NKTP…SQCI). Residues 1697–1710 (HAEHSGESLGKELS) show a composition bias toward basic and acidic residues. Residues 1880–1894 (QTEHQEQESSSKEEE) show a composition bias toward basic and acidic residues. The ALMS motif stretch occupies residues 2329-2395 (SLGEAFMKRK…TAKRNRSQCI (67 aa)). Basic and acidic residues predominate over residues 2376-2388 (HLKEAVSGDETAK).

Interacts (via ALMS motif) with microtubules; this interaction is direct.

The protein localises to the cytoplasm. It is found in the cytoskeleton. Its subcellular location is the microtubule organizing center. The protein resides in the centrosome. It localises to the centriole. The protein localises to the spindle. Functionally, centriole-enriched microtubule-binding protein involved in centriole biogenesis. Essential for the generation of the distal portion of new-born centrioles in a CPAP- and CEP120-mediated elongation dependent manner during the cell cycle S/G2 phase after formation of the initiating cartwheel structure. Required for the recruitment of centriolar proteins, such as POC1B, POC5 and CEP135, into the distal portion of centrioles. Also required for centriole-to-centrosome conversion during mitotic progression, but is dispensable for cartwheel removal or centriole disengagement. Binds to and stabilizes centriolar microtubule. May be involved in ciliogenesis. This chain is Centrosomal protein of 295 kDa, found in Rattus norvegicus (Rat).